Here is a 211-residue protein sequence, read N- to C-terminus: Major fimbrial subunit (211 aa).

A signal peptide spans 1–20 (MKKTLLGSLILLAFAGNVQA). The cysteines at positions 43 and 83 are disulfide-linked.

It belongs to the fimbrial protein family.

The protein localises to the fimbrium. In terms of biological role, mediates adherence to oropharyngeal epithelial cells. Helps the airway colonization process. The protein is Major fimbrial subunit (hifA) of Haemophilus influenzae.